A 530-amino-acid polypeptide reads, in one-letter code: UDP-glucuronosyltransferase 2A3 (530 aa).

Positions 1–23 are cleaved as a signal peptide; that stretch reads MAPGKLASAVLLLLLCCAGSGFC. At 24-494 the chain is on the extracellular side; the sequence is GKVLVWPCEM…SWFQYHSLDV (471 aa). N316 carries N-linked (GlcNAc...) asparagine glycosylation. The helical transmembrane segment at 495 to 515 threads the bilayer; the sequence is IGFLLACVASAILLVTKCCLF. The Cytoplasmic portion of the chain corresponds to 516–530; the sequence is SFQNFIKIGKRIKKE.

This sequence belongs to the UDP-glycosyltransferase family. As to expression, specifically expressed in liver and small intestine.

Its subcellular location is the membrane. It carries out the reaction glucuronate acceptor + UDP-alpha-D-glucuronate = acceptor beta-D-glucuronoside + UDP + H(+). UDP-glucuronosyltransferases catalyze phase II biotransformation reactions in which lipophilic substrates are conjugated with glucuronic acid to increase water solubility and enhance excretion. They are of major importance in the conjugation and subsequent elimination of potentially toxic xenobiotics and endogenous compounds. The protein is UDP-glucuronosyltransferase 2A3 (UGT2A3) of Cavia porcellus (Guinea pig).